The following is a 184-amino-acid chain: Ribosome maturation factor RimM (184 aa).

Residues 101–174 (PDEYYDHQLV…RVVIADRPGL (74 aa)) enclose the PRC barrel domain.

The protein belongs to the RimM family. Binds ribosomal protein uS19.

Its subcellular location is the cytoplasm. Its function is as follows. An accessory protein needed during the final step in the assembly of 30S ribosomal subunit, possibly for assembly of the head region. Essential for efficient processing of 16S rRNA. May be needed both before and after RbfA during the maturation of 16S rRNA. It has affinity for free ribosomal 30S subunits but not for 70S ribosomes. The protein is Ribosome maturation factor RimM of Nocardioides sp. (strain ATCC BAA-499 / JS614).